Consider the following 382-residue polypeptide: Histidinol-phosphate aminotransferase (382 aa).

N6-(pyridoxal phosphate)lysine is present on Lys215. The tract at residues 363 to 382 is disordered; that stretch reads NIDNQSKTHSQTSSIRKGTI.

The protein belongs to the class-II pyridoxal-phosphate-dependent aminotransferase family. Histidinol-phosphate aminotransferase subfamily. As to quaternary structure, homodimer. Requires pyridoxal 5'-phosphate as cofactor.

It catalyses the reaction L-histidinol phosphate + 2-oxoglutarate = 3-(imidazol-4-yl)-2-oxopropyl phosphate + L-glutamate. It participates in amino-acid biosynthesis; L-histidine biosynthesis; L-histidine from 5-phospho-alpha-D-ribose 1-diphosphate: step 7/9. The polypeptide is Histidinol-phosphate aminotransferase (Yersinia pseudotuberculosis serotype O:1b (strain IP 31758)).